The chain runs to 147 residues: Glucosamine 6-phosphate N-acetyltransferase (147 aa).

Residues 7–147 (LELRVLEESD…AHERQMRLDL (141 aa)) form the N-acetyltransferase domain. D-glucosamine 6-phosphate-binding positions include Thr-28 and 86-88 (EDV). Acetyl-CoA-binding positions include 88 to 90 (VVV) and 96 to 101 (GAGLGK). Residues 117–118 (YK) and Asp-122 contribute to the D-glucosamine 6-phosphate site. Residue 131–133 (YEK) participates in acetyl-CoA binding.

The protein belongs to the acetyltransferase family. GNA1 subfamily. Homodimer. In terms of processing, contains poly-N-acetyllactosamines.

It localises to the glycosome. It carries out the reaction D-glucosamine 6-phosphate + acetyl-CoA = N-acetyl-D-glucosamine 6-phosphate + CoA + H(+). Its pathway is nucleotide-sugar biosynthesis; UDP-N-acetyl-alpha-D-glucosamine biosynthesis; N-acetyl-alpha-D-glucosamine 1-phosphate from alpha-D-glucosamine 6-phosphate (route I): step 1/2. Functionally, involved in the biosynthesis of UDP-N-acetyl-alpha-D-glucosamine. Catalyzes the formation of N-acetyl-D-glucosamine 6-phosphate from acetyl-coenzyme A (acetyl-CoA) and D-glucosamine 6-phosphate. This chain is Glucosamine 6-phosphate N-acetyltransferase, found in Trypanosoma brucei brucei.